The chain runs to 388 residues: Zinc finger CCCH domain-containing protein 47 (388 aa).

2 disordered regions span residues 1–130 and 144–282; these read MADP…MAPL and PLHE…TPSA. 2 stretches are compositionally biased toward basic and acidic residues: residues 61–109 and 181–193; these read AAND…KSEV and PDNHDHDPRHLPR. Positions 260–274 are enriched in low complexity; it reads ASSSSSSSSAGQQGS. 2 C3H1-type zinc fingers span residues 321–348 and 359–388; these read HHKIALCSKWRKGRCHNGAACRYSHGEE and GGGGRPCPELAAAKGWCRYGLNCKYCHGGV.

The sequence is that of Zinc finger CCCH domain-containing protein 47 from Oryza sativa subsp. japonica (Rice).